A 454-amino-acid polypeptide reads, in one-letter code: Phosphoglucosamine mutase (454 aa).

Residue serine 104 is the Phosphoserine intermediate of the active site. 4 residues coordinate Mg(2+): serine 104, aspartate 241, aspartate 243, and aspartate 245. At serine 104 the chain carries Phosphoserine.

This sequence belongs to the phosphohexose mutase family. Mg(2+) serves as cofactor. In terms of processing, activated by phosphorylation.

It catalyses the reaction alpha-D-glucosamine 1-phosphate = D-glucosamine 6-phosphate. Catalyzes the conversion of glucosamine-6-phosphate to glucosamine-1-phosphate. The sequence is that of Phosphoglucosamine mutase from Paenarthrobacter aurescens (strain TC1).